A 148-amino-acid chain; its full sequence is Meiosis inducing protein mei3 (148 aa).

Over residues 1 to 20 (MSSQNTSNSRHPASSASALP) the composition is skewed to polar residues. Residues 1–96 (MSSQNTSNSR…AQRIEHENKE (96 aa)) form a disordered region. Positions 21-46 (NRTNTARRSTSPRTSTGSSSTNTNTK) are enriched in low complexity. Positions 75-86 (PMKRTKRVRRTP) are enriched in basic residues.

Functionally, acts as a critical meiotic inducer by binding non-covalently to protein kinase ran1/pat1 inhibiting its enzymatic activity. Inhibits ran1/pat1 by acting as a pseudosubstrate for ran1/pat1 instead of its natural substrate ste11. Inactivation of the ran1/pat1 protein kinase is both necessary and sufficient to divert a vegetative cell from mitotic division to meiotic differentiation. In Schizosaccharomyces pombe (strain 972 / ATCC 24843) (Fission yeast), this protein is Meiosis inducing protein mei3.